Here is a 247-residue protein sequence, read N- to C-terminus: Protein NipSnap homolog 3A (247 aa).

N6-acetyllysine is present on residues Lys48 and Lys166.

It belongs to the NipSnap family.

The protein resides in the cytoplasm. It is found in the cytosol. This chain is Protein NipSnap homolog 3A (NIPSNAP3A), found in Pongo abelii (Sumatran orangutan).